The primary structure comprises 499 residues: Bestrophin homolog 22 (499 aa).

Transmembrane regions (helical) follow at residues 29 to 49, 77 to 97, 235 to 255, and 267 to 287; these read WKAV…ISCI, IPLT…WGSI, LVYP…CLIG, and GIDL…MGWM. Basic and acidic residues predominate over residues 417–432; the sequence is HNAKHAKQRGLERANS. 2 disordered regions span residues 417–455 and 474–499; these read HNAK…ANGS and TSNP…TSRH.

This sequence belongs to the anion channel-forming bestrophin (TC 1.A.46) family. Calcium-sensitive chloride channel subfamily. As to quaternary structure, forms oligomers.

The protein localises to the cell membrane. In terms of biological role, forms chloride channels. The polypeptide is Bestrophin homolog 22 (best-22) (Caenorhabditis elegans).